A 105-amino-acid chain; its full sequence is MRKIRTGDEVIVIAGKDKGRRGRVSRVIPEKDRVIVDNVNMVKRHTRGNPMQGTTGGIIEKEAPIHISNVAIYNPETEKADRVGVRQEGDRKVRYFKSNQQLIDA.

Belongs to the universal ribosomal protein uL24 family. Part of the 50S ribosomal subunit.

Functionally, one of two assembly initiator proteins, it binds directly to the 5'-end of the 23S rRNA, where it nucleates assembly of the 50S subunit. In terms of biological role, one of the proteins that surrounds the polypeptide exit tunnel on the outside of the subunit. The protein is Large ribosomal subunit protein uL24 of Halorhodospira halophila (strain DSM 244 / SL1) (Ectothiorhodospira halophila (strain DSM 244 / SL1)).